Consider the following 1613-residue polypeptide: Reverse gyrase (1613 aa).

The segment at 1-38 (MIPMIYKEMCPNCNGEITSERLAIGVCEKCLKEENVFE) adopts an RG N-terminal-type zinc-finger fold. Residues Cys10, Cys13, Cys27, and Cys30 each contribute to the Zn(2+) site. Residues Gln83 and 100 to 107 (VPTGVGKS) each bind ATP. The Helicase ATP-binding domain maps to 87 to 291 (AKRVLKNKSF…LYRELLDFEI (205 aa)). Residues 203–206 (DDVD) carry the DEAD box motif. The Helicase C-terminal domain maps to 310-525 (SKEKILEYIK…IDEVNLEELI (216 aa)). Residues 546 to 1613 (DLLKSVLMVV…ALHEEILSIR (1068 aa)) form a topoisomerase I region. One can recognise a Toprim domain in the interval 550-712 (SVLMVVESPN…NIYRVGFNEI (163 aa)). 2 residues coordinate Mg(2+): Glu556 and Asp681. Residues 733–1613 (DENKVKGQVV…ALHEEILSIR (881 aa)) form the Topo IA-type catalytic domain. A DOD-type homing endonuclease domain is found at 1070-1199 (FAGLVLGDGS…IGIYLNSIGI (130 aa)). Tyr1363 functions as the O-(5'-phospho-DNA)-tyrosine intermediate in the catalytic mechanism.

In the N-terminal section; belongs to the DEAD box helicase family. DDVD subfamily. It in the C-terminal section; belongs to the type IA topoisomerase family. As to quaternary structure, monomer. Requires Zn(2+) as cofactor. Mg(2+) is required as a cofactor. Post-translationally, this protein undergoes a protein self splicing that involves a post-translational excision of the intervening region (intein) followed by peptide ligation.

It is found in the cytoplasm. It catalyses the reaction ATP + H2O = ADP + phosphate + H(+). Its function is as follows. Modifies the topological state of DNA by introducing positive supercoils in an ATP-dependent process, increasing the linking number in steps of +1. Binds to single-stranded DNA, transiently cleaves and then rejoins the ends, introducing a positive supercoil in the process. The scissile phosphodiester is attacked by the catalytic tyrosine of the enzyme, resulting in the formation of a DNA-(5'-phosphotyrosyl)-enzyme intermediate. Probably involved in rewinding DNA strands in regions of the chromosome that have opened up to allow replication, transcription, DNA repair and/or for DNA protection. The chain is Reverse gyrase from Methanocaldococcus jannaschii (strain ATCC 43067 / DSM 2661 / JAL-1 / JCM 10045 / NBRC 100440) (Methanococcus jannaschii).